The sequence spans 590 residues: (-)-alpha-terpineol synthase (590 aa).

Mg(2+)-binding residues include Asp339, Asp343, Asp483, Thr487, and Glu491. Positions 339–343 match the DDXXD motif motif; it reads DDVYD.

The protein belongs to the terpene synthase family. Mg(2+) serves as cofactor.

The catalysed reaction is (2E)-geranyl diphosphate + H2O = (S)-alpha-terpineol + diphosphate. It participates in secondary metabolite biosynthesis; terpenoid biosynthesis. Functionally, mediates the conversion of geranyl diphosphate into alpha-terpineol, a monoterpenol. Monoterpenols contribute to the final grape and wine aroma and flavor. Also forms some 1,8-cineole and traces of other monoterpenoids. The polypeptide is (-)-alpha-terpineol synthase (Vitis vinifera (Grape)).